A 284-amino-acid polypeptide reads, in one-letter code: 2-dehydro-3-deoxyphosphooctonate aldolase (284 aa).

This sequence belongs to the KdsA family.

The protein localises to the cytoplasm. It catalyses the reaction D-arabinose 5-phosphate + phosphoenolpyruvate + H2O = 3-deoxy-alpha-D-manno-2-octulosonate-8-phosphate + phosphate. It functions in the pathway carbohydrate biosynthesis; 3-deoxy-D-manno-octulosonate biosynthesis; 3-deoxy-D-manno-octulosonate from D-ribulose 5-phosphate: step 2/3. Its pathway is bacterial outer membrane biogenesis; lipopolysaccharide biosynthesis. This chain is 2-dehydro-3-deoxyphosphooctonate aldolase, found in Erwinia tasmaniensis (strain DSM 17950 / CFBP 7177 / CIP 109463 / NCPPB 4357 / Et1/99).